The primary structure comprises 236 residues: Putative (5-formylfuran-3-yl)methyl phosphate synthase (236 aa).

The active-site Schiff-base intermediate with substrate is the Lys-38. Lys-94 serves as the catalytic Proton acceptor.

The protein belongs to the MfnB family.

It carries out the reaction 2 D-glyceraldehyde 3-phosphate = 4-(hydroxymethyl)-2-furancarboxaldehyde phosphate + phosphate + 2 H2O. Catalyzes the formation of 4-(hydroxymethyl)-2-furancarboxaldehyde phosphate (4-HFC-P) from two molecules of glyceraldehyde-3-P (GA-3-P). The polypeptide is Putative (5-formylfuran-3-yl)methyl phosphate synthase (Methylorubrum extorquens (Methylobacterium dichloromethanicum)).